Reading from the N-terminus, the 446-residue chain is Tubulin beta-2 chain (446 aa).

Residues glutamine 11, glutamate 69, serine 138, glycine 142, threonine 143, glycine 144, asparagine 204, and asparagine 226 each coordinate GTP. Glutamate 69 contributes to the Mg(2+) binding site. The tract at residues 426–446 (QEAGIDEEEEYEEEAPAEHEE) is disordered. Acidic residues predominate over residues 429–440 (GIDEEEEYEEEA).

This sequence belongs to the tubulin family. In terms of assembly, dimer of alpha and beta chains. A typical microtubule is a hollow water-filled tube with an outer diameter of 25 nm and an inner diameter of 15 nM. Alpha-beta heterodimers associate head-to-tail to form protofilaments running lengthwise along the microtubule wall with the beta-tubulin subunit facing the microtubule plus end conferring a structural polarity. Microtubules usually have 13 protofilaments but different protofilament numbers can be found in some organisms and specialized cells. The cofactor is Mg(2+).

It localises to the cytoplasm. The protein resides in the cytoskeleton. Tubulin is the major constituent of microtubules, a cylinder consisting of laterally associated linear protofilaments composed of alpha- and beta-tubulin heterodimers. Microtubules grow by the addition of GTP-tubulin dimers to the microtubule end, where a stabilizing cap forms. Below the cap, tubulin dimers are in GDP-bound state, owing to GTPase activity of alpha-tubulin. The protein is Tubulin beta-2 chain of Hypocrea virens (Gliocladium virens).